A 259-amino-acid polypeptide reads, in one-letter code: Probable UMP-CMP kinase 2 (259 aa).

63–68 (GSGKGT) is a binding site for ATP. The segment at 83–112 (SAGDLLRREIAMHTENGAMILNLIKDGKIV) is NMP. A ribonucleoside 5'-phosphate-binding positions include Arg-89, 110-112 (KIV), and 137-140 (GFPR). Asn-144 is a binding site for CMP. The segment at 175-183 (NRNQGRIDD) is LID. Arg-176 serves as a coordination point for ATP. Positions 180 and 191 each coordinate a ribonucleoside 5'-phosphate. Gly-219 is an ATP binding site.

Belongs to the adenylate kinase family. UMP-CMP kinase subfamily. In terms of assembly, monomer. The cofactor is Mg(2+).

It is found in the cytoplasm. The protein localises to the nucleus. The enzyme catalyses CMP + ATP = CDP + ADP. It catalyses the reaction dCMP + ATP = dCDP + ADP. The catalysed reaction is UMP + ATP = UDP + ADP. Functionally, catalyzes the phosphorylation of pyrimidine nucleoside monophosphates at the expense of ATP. Plays an important role in de novo pyrimidine nucleotide biosynthesis. Has preference for UMP and CMP as phosphate acceptors. This Arabidopsis thaliana (Mouse-ear cress) protein is Probable UMP-CMP kinase 2 (UMK2).